A 788-amino-acid chain; its full sequence is Cadherin-related family member 4 (788 aa).

A signal peptide spans 1–16; sequence MVLLRLLVFLFAPVVS. The Extracellular portion of the chain corresponds to 17–686; sequence DLCSLPCFIN…DTEAFWQPQP (670 aa). Cadherin domains lie at 237–338, 339–449, 444–554, and 551–674; these read LEQA…PPRC, LPAL…APRT, ACAP…EPPF, and EPPF…TPML. Residue asparagine 242 is glycosylated (N-linked (GlcNAc...) asparagine). Residues 687–707 traverse the membrane as a helical segment; that stretch reads WFVVVLTATGALLLLALGWLL. The Cytoplasmic segment spans residues 708-788; the sequence is GRLLQGLAQL…NTHTGARRWL (81 aa).

The protein resides in the membrane. In terms of biological role, cadherins are calcium-dependent cell adhesion proteins. They preferentially interact with themselves in a homophilic manner in connecting cells; cadherins may thus contribute to the sorting of heterogeneous cell types. This Homo sapiens (Human) protein is Cadherin-related family member 4 (CDHR4).